The primary structure comprises 78 residues: Large ribosomal subunit protein bL28 (78 aa).

It belongs to the bacterial ribosomal protein bL28 family.

In Prochlorococcus marinus (strain MIT 9515), this protein is Large ribosomal subunit protein bL28.